A 529-amino-acid chain; its full sequence is Bifunctional purine biosynthesis protein PurH (529 aa).

The MGS-like domain occupies 1–148; the sequence is MNNVRPIRRA…KNHKDTTIVV (148 aa).

The protein belongs to the PurH family.

The catalysed reaction is (6R)-10-formyltetrahydrofolate + 5-amino-1-(5-phospho-beta-D-ribosyl)imidazole-4-carboxamide = 5-formamido-1-(5-phospho-D-ribosyl)imidazole-4-carboxamide + (6S)-5,6,7,8-tetrahydrofolate. It catalyses the reaction IMP + H2O = 5-formamido-1-(5-phospho-D-ribosyl)imidazole-4-carboxamide. Its pathway is purine metabolism; IMP biosynthesis via de novo pathway; 5-formamido-1-(5-phospho-D-ribosyl)imidazole-4-carboxamide from 5-amino-1-(5-phospho-D-ribosyl)imidazole-4-carboxamide (10-formyl THF route): step 1/1. The protein operates within purine metabolism; IMP biosynthesis via de novo pathway; IMP from 5-formamido-1-(5-phospho-D-ribosyl)imidazole-4-carboxamide: step 1/1. In Shewanella frigidimarina (strain NCIMB 400), this protein is Bifunctional purine biosynthesis protein PurH.